The chain runs to 577 residues: MNIQALLSEKVSQAMIAAGAPADCEPQVRQSAKVQFGDYQANGMMAVAKKLGMAPRQLAEQVLTHLDLSGIASKVEIAGPGFINIFLEPAFLAEQVQQALASDRLGVSQPTRQTIVVDYSAPNVAKEMHVGHLRSTIIGDAAVRTLEFLGHHVIRANHVGDWGTQFGMLIAWLEKQQQENAGDMALADLEGFYRDAKKHYDEDEAFAERARNYVVKLQSGDAYFREMWRKLVDITMTQNQITYDRLNVTLTRDDVMGESLYNPMLPGIVADLKAKGLAVESEGATVVFLDEFKNKEGDPMGVIIQKKDGGYLYTTTDIACAKYRYETLHADRVLYYIDSRQHQHLMQAWTIVRKAGYVPDSVPLEHHMFGMMLGKDGKPFKTRAGGTVKLADLLDEALERARRLVAEKNPDMPADELEKLANAVGIGAVKYADLSKNRTTDYIFDWDNMLAFEGNTAPYMQYAYTRVLSVFRKADIDEQALASAPVIISEDREAQLAARLLQFEETLTVVAREGTPHVMCAYLYDVAGLFSGFYEHCPILSAENDAVRNSRLKLAQLTAKTLKLGLDTLGIETVERM.

Positions 122-132 match the 'HIGH' region motif; the sequence is PNVAKEMHVGH.

It belongs to the class-I aminoacyl-tRNA synthetase family. In terms of assembly, monomer.

It localises to the cytoplasm. The enzyme catalyses tRNA(Arg) + L-arginine + ATP = L-arginyl-tRNA(Arg) + AMP + diphosphate. The sequence is that of Arginine--tRNA ligase from Salmonella choleraesuis (strain SC-B67).